The chain runs to 126 residues: Large ribosomal subunit protein bL20 (126 aa).

Belongs to the bacterial ribosomal protein bL20 family.

In terms of biological role, binds directly to 23S ribosomal RNA and is necessary for the in vitro assembly process of the 50S ribosomal subunit. It is not involved in the protein synthesizing functions of that subunit. This is Large ribosomal subunit protein bL20 from Acholeplasma laidlawii (strain PG-8A).